The chain runs to 221 residues: Endo-1,4-beta-xylanase 1 (221 aa).

The signal sequence occupies residues 1–22 (MKFFATIAALVVAAVAAPVAEA). The GH11 domain occupies 29–221 (PMLIERAGPG…GTGSASVTVS (193 aa)). Glu114 serves as the catalytic Nucleophile. Glu208 acts as the Proton donor in catalysis.

The protein belongs to the glycosyl hydrolase 11 (cellulase G) family.

It is found in the secreted. It catalyses the reaction Endohydrolysis of (1-&gt;4)-beta-D-xylosidic linkages in xylans.. It participates in glycan degradation; xylan degradation. Its function is as follows. Endo-1,4-beta-xylanase involved in the hydrolysis of xylan, a major structural heterogeneous polysaccharide found in plant biomass representing the second most abundant polysaccharide in the biosphere, after cellulose. Hydrolyzes xylans from oat spelt and birchwood at similar rates, but it has no detectable activity toward Avicel or carboxymethyl cellulose. The sequence is that of Endo-1,4-beta-xylanase 1 (xynI) from Aureobasidium pullulans (Black yeast).